Reading from the N-terminus, the 207-residue chain is uncharacterized protein (207 aa).

It localises to the mitochondrion. This is an uncharacterized protein from Marchantia polymorpha (Common liverwort).